Consider the following 241-residue polypeptide: Small ribosomal subunit protein eS4 (241 aa).

Positions Ile-43–Asp-105 constitute an S4 RNA-binding domain.

Belongs to the eukaryotic ribosomal protein eS4 family.

The polypeptide is Small ribosomal subunit protein eS4 (Methanosphaera stadtmanae (strain ATCC 43021 / DSM 3091 / JCM 11832 / MCB-3)).